A 292-amino-acid polypeptide reads, in one-letter code: 4-hydroxy-tetrahydrodipicolinate synthase (292 aa).

A pyruvate-binding site is contributed by Thr-45. Tyr-133 functions as the Proton donor/acceptor in the catalytic mechanism. The Schiff-base intermediate with substrate role is filled by Lys-162. Ile-204 serves as a coordination point for pyruvate.

Belongs to the DapA family. Homotetramer; dimer of dimers.

The protein resides in the cytoplasm. The catalysed reaction is L-aspartate 4-semialdehyde + pyruvate = (2S,4S)-4-hydroxy-2,3,4,5-tetrahydrodipicolinate + H2O + H(+). Its pathway is amino-acid biosynthesis; L-lysine biosynthesis via DAP pathway; (S)-tetrahydrodipicolinate from L-aspartate: step 3/4. In terms of biological role, catalyzes the condensation of (S)-aspartate-beta-semialdehyde [(S)-ASA] and pyruvate to 4-hydroxy-tetrahydrodipicolinate (HTPA). The polypeptide is 4-hydroxy-tetrahydrodipicolinate synthase (Nitratidesulfovibrio vulgaris (strain ATCC 29579 / DSM 644 / CCUG 34227 / NCIMB 8303 / VKM B-1760 / Hildenborough) (Desulfovibrio vulgaris)).